Consider the following 2684-residue polypeptide: Probable polyketide synthase 27 (2684 aa).

The Ketosynthase family 3 (KS3) domain maps to Cys11–Glu442. Active-site for beta-ketoacyl synthase activity residues include Cys183, His322, and His365. Positions Gly650–Tyr683 are acyl/malonyl transferases. Ser660 serves as the catalytic For acyl/malonyl transferase activity. An N-terminal hotdog fold region spans residues His958 to Ser1087. Positions His958–Arg1276 constitute a PKS/mFAS DH domain. His999 serves as the catalytic Proton acceptor; for dehydratase activity. The segment at Asn1104–Arg1276 is C-terminal hotdog fold. The active-site Proton donor; for dehydratase activity is Asp1173. The tract at residues Ile1202–Asn1221 is disordered. The Carrier domain occupies Ser2585–Tyr2662. The residue at position 2622 (Ser2622) is an O-(pantetheine 4'-phosphoryl)serine.

It depends on pantetheine 4'-phosphate as a cofactor.

Probable polyketide synthase. The protein is Probable polyketide synthase 27 (pks27) of Dictyostelium discoideum (Social amoeba).